Here is a 1771-residue protein sequence, read N- to C-terminus: Fatty acid synthase alpha subunit pkiB (1771 aa).

Polar residues predominate over residues 108–130 (SQPTQPQFEPTSPSHLTKRSPSP). The disordered stretch occupies residues 108–133 (SQPTQPQFEPTSPSHLTKRSPSPSKA). In terms of domain architecture, Carrier spans 143–221 (ELTLQAGHVI…ESFQPEFSGI (79 aa)). Serine 181 carries the post-translational modification O-(pantetheine 4'-phosphoryl)serine. Residues 575–771 (HKAVLVTGAG…CGAVIGWTRG (197 aa)) form a beta-ketoacyl reductase region. Residues 1011-1531 (KELLHEVAVE…QKGAINIMVS (521 aa)) enclose the Ketosynthase family 3 (KS3) domain. Catalysis depends on for beta-ketoacyl synthase activity residues cysteine 1197, histidine 1416, and histidine 1457. Mg(2+) is bound by residues aspartate 1650, valine 1651, and glutamate 1652. Acetyl-CoA is bound by residues 1650–1652 (DVE), tyrosine 1676, serine 1686, 1695–1705 (EAAFKSLQTTS), 1719–1722 (EVGG), and 1753–1755 (ISH). Residues serine 1754 and histidine 1755 each contribute to the Mg(2+) site.

It belongs to the thiolase-like superfamily. Fungal fatty acid synthetase subunit alpha family. In terms of assembly, [Alpha(6)beta(6)] hexamers of two multifunctional subunits (alpha and beta).

The catalysed reaction is acetyl-CoA + n malonyl-CoA + 2n NADPH + 4n H(+) = a long-chain-acyl-CoA + n CoA + n CO2 + 2n NADP(+).. It catalyses the reaction a fatty acyl-[ACP] + malonyl-[ACP] + H(+) = a 3-oxoacyl-[ACP] + holo-[ACP] + CO2. The enzyme catalyses a (3R)-hydroxyacyl-[ACP] + NADP(+) = a 3-oxoacyl-[ACP] + NADPH + H(+). It participates in secondary metabolite biosynthesis. Its function is as follows. Fatty acid synthase alpha subunit; part of the pki gene cluster that mediates the biosynthesis of 2,4-dihydroxy-3-methyl-6-(2-oxoundecyl)benzaldehyde. The first step in the pathway is the generation of the decanoyl starter unit by the FAS composed of subunits pkiB and pkiC, which is then transferred directly from the FAS to the SAT domain of the non-reducing polyketide synthase pkiA. PkiA condenses the decanoyyl starter unit with 4 malonyl-CoA units and performs one methylation step to yield 2,4-dihydroxy-3-methyl-6-(2-oxoundecyl)benzaldehyde. This Emericella nidulans (strain FGSC A4 / ATCC 38163 / CBS 112.46 / NRRL 194 / M139) (Aspergillus nidulans) protein is Fatty acid synthase alpha subunit pkiB.